The chain runs to 805 residues: G-type lectin S-receptor-like serine/threonine-protein kinase SD1-29 (805 aa).

Residues 1-21 (MGMVLFACLLLLIIFPTCGYA) form the signal peptide. The Bulb-type lectin domain occupies 22–141 (AINTSSPLSI…VSGNKLWQSF (120 aa)). Residues 22–428 (AINTSSPLSI…SELAGSSRRK (407 aa)) lie on the Extracellular side of the membrane. N-linked (GlcNAc...) asparagine glycans are attached at residues Asn24, Asn50, Asn85, Asn91, and Asn248. The EGF-like domain maps to 277-313 (PENPCDLYGRCGPYGLCVRSDPPKCECLKGFVPKSDE). Disulfide bonds link Cys281-Cys293 and Cys287-Cys301. Residues Asn319 and Asn378 are each glycosylated (N-linked (GlcNAc...) asparagine). A PAN domain is found at 332 to 418 (CQAKSSMKTQ…GEFLFIRLAS (87 aa)). 2 disulfides stabilise this stretch: Cys371–Cys392 and Cys375–Cys381. A helical membrane pass occupies residues 429–449 (IIVGTTVSLSIFLILVFAAIM). Residues 450–805 (LWRYRAKQND…EMTESMIQGR (356 aa)) are Cytoplasmic-facing. One can recognise a Protein kinase domain in the interval 488-773 (FSPSNKLGQG…DLPVPKQPIF (286 aa)). Residues 494–502 (LGQGGFGPV) and Lys516 contribute to the ATP site. Phosphoserine occurs at positions 522 and 537. Residues 577–594 (CLKFELDWPKRFNIIQGI) form a caM-binding region. Tyr600 is subject to Phosphotyrosine. The active-site Proton acceptor is the Asp613. Residues Ser617 and Ser630 each carry the phosphoserine modification. The residue at position 647 (Thr647) is a Phosphothreonine. Phosphoserine is present on residues Ser690 and Ser793.

It belongs to the protein kinase superfamily. Ser/Thr protein kinase family. Interacts with PUB9, PUB13, PUB14, PUB29, PUB38, PUB44 and PUB45. Interacts with PBL34, PBL35 and PBL36. In terms of processing, autophosphorylated at Tyr-600. Autophosphorylation at Tyr-600 is required for downstream phosphorylation of the receptor-like cytoplasmic kinase PBL34, PBL35 and PBL36, and activation of plant immunity.

The protein resides in the cell membrane. It carries out the reaction L-seryl-[protein] + ATP = O-phospho-L-seryl-[protein] + ADP + H(+). The catalysed reaction is L-threonyl-[protein] + ATP = O-phospho-L-threonyl-[protein] + ADP + H(+). It catalyses the reaction L-tyrosyl-[protein] + ATP = O-phospho-L-tyrosyl-[protein] + ADP + H(+). Functionally, S-domain receptor protein kinase involved in lipopolysaccharide (LPS) sensing. Specifically detects LPS of Pseudomonas and Xanthomonas species. LPS are major components of the outer membrane of Gram-negative bacteria and are important microbe-associated molecular patterns (MAMPs) that trigger biphasic production of reactive oxygen species (ROS) and immune responses in plants. Seems to be only partially associated with the second LPS-triggered ROS burst. Mediates defense signaling in response to the medium-chain 3-hydroxy fatty acid 3-OH-C10:0, a pathogen-associated molecular pattern (PAMP) which induces autophosphorylation at Tyr-600. Autophosphorylation at Tyr-600 is required for downstream phosphorylation of the receptor-like cytoplasmic kinase PBL34, PBL35 and PBL36, and activation of plant immunity. Its function is as follows. (Microbial infection) Targeted by the bacterial type III effector protein tyrosine phosphatase HopAO1 from Pseudomonas syringae. HopAO1 dephosphorylates Tyr-600, which suppresses the immune response. The sequence is that of G-type lectin S-receptor-like serine/threonine-protein kinase SD1-29 from Arabidopsis thaliana (Mouse-ear cress).